The chain runs to 266 residues: Interleukin-1 beta (266 aa).

A propeptide spanning residues 1 to 113 (MATVPEPTNE…ETYDDDLLCD (113 aa)) is cleaved from the precursor.

Belongs to the IL-1 family. As to quaternary structure, monomer. In its precursor form, weakly interacts with full-length MEFV; the mature cytokine does not interact at all. Interacts with integrins ITGAV:ITGBV and ITGA5:ITGB1; integrin-binding is required for IL1B signaling. Interacts with cargo receptor TMED10; the interaction is direct and is required for the secretion of IL1B mature form. Interacts with HSP90AB1; the interaction facilitates cargo translocation into the ERGIC. Interacts with HSP90B1; the interaction facilitates cargo translocation into the ERGIC.

It localises to the cytoplasm. The protein resides in the cytosol. Its subcellular location is the secreted. The protein localises to the lysosome. It is found in the extracellular exosome. Its function is as follows. Potent pro-inflammatory cytokine. Initially discovered as the major endogenous pyrogen, induces prostaglandin synthesis, neutrophil influx and activation, T-cell activation and cytokine production, B-cell activation and antibody production, and fibroblast proliferation and collagen production. Promotes Th17 differentiation of T-cells. Synergizes with IL12/interleukin-12 to induce IFNG synthesis from T-helper 1 (Th1) cells. Plays a role in angiogenesis by inducing VEGF production synergistically with TNF and IL6. Involved in transduction of inflammation downstream of pyroptosis: its mature form is specifically released in the extracellular milieu by passing through the gasdermin-D (GSDMD) pore. The polypeptide is Interleukin-1 beta (IL1B) (Delphinapterus leucas (Beluga whale)).